A 211-amino-acid chain; its full sequence is Proteasome subunit beta 1 (211 aa).

The propeptide at 1-17 is removed in mature form; by autocatalysis; that stretch reads MVIMGNELQLENKILKG. Threonine 18 acts as the Nucleophile in catalysis.

Belongs to the peptidase T1B family. The 20S proteasome core is composed of 14 alpha and 14 beta subunits that assemble into four stacked heptameric rings, resulting in a barrel-shaped structure. The two inner rings, each composed of seven catalytic beta subunits, are sandwiched by two outer rings, each composed of seven alpha subunits. The catalytic chamber with the active sites is on the inside of the barrel. Has a gated structure, the ends of the cylinder being occluded by the N-termini of the alpha-subunits. Is capped at one or both ends by the proteasome regulatory ATPase, PAN.

It is found in the cytoplasm. The catalysed reaction is Cleavage of peptide bonds with very broad specificity.. The formation of the proteasomal ATPase PAN-20S proteasome complex, via the docking of the C-termini of PAN into the intersubunit pockets in the alpha-rings, triggers opening of the gate for substrate entry. Interconversion between the open-gate and close-gate conformations leads to a dynamic regulation of the 20S proteasome proteolysis activity. Functionally, component of the proteasome core, a large protease complex with broad specificity involved in protein degradation. The polypeptide is Proteasome subunit beta 1 (Saccharolobus islandicus (strain M.16.27) (Sulfolobus islandicus)).